The following is a 705-amino-acid chain: Phosphoribosylformylglycinamidine synthase subunit PurL (705 aa).

H32 is a catalytic residue. Y35 provides a ligand contact to ATP. E76 serves as a coordination point for Mg(2+). Substrate-binding positions include 77–80 (SHNH) and R99. H78 functions as the Proton acceptor in the catalytic mechanism. Residue D100 participates in Mg(2+) binding. Q224 contacts substrate. D252 is a binding site for Mg(2+). 296 to 298 (ESQ) is a substrate binding site. ATP-binding residues include D471 and G508. Residue N509 participates in Mg(2+) binding. Position 511 (S511) interacts with substrate.

It belongs to the FGAMS family. In terms of assembly, monomer. Part of the FGAM synthase complex composed of 1 PurL, 1 PurQ and 2 PurS subunits.

It localises to the cytoplasm. It catalyses the reaction N(2)-formyl-N(1)-(5-phospho-beta-D-ribosyl)glycinamide + L-glutamine + ATP + H2O = 2-formamido-N(1)-(5-O-phospho-beta-D-ribosyl)acetamidine + L-glutamate + ADP + phosphate + H(+). Its pathway is purine metabolism; IMP biosynthesis via de novo pathway; 5-amino-1-(5-phospho-D-ribosyl)imidazole from N(2)-formyl-N(1)-(5-phospho-D-ribosyl)glycinamide: step 1/2. Its function is as follows. Part of the phosphoribosylformylglycinamidine synthase complex involved in the purines biosynthetic pathway. Catalyzes the ATP-dependent conversion of formylglycinamide ribonucleotide (FGAR) and glutamine to yield formylglycinamidine ribonucleotide (FGAM) and glutamate. The FGAM synthase complex is composed of three subunits. PurQ produces an ammonia molecule by converting glutamine to glutamate. PurL transfers the ammonia molecule to FGAR to form FGAM in an ATP-dependent manner. PurS interacts with PurQ and PurL and is thought to assist in the transfer of the ammonia molecule from PurQ to PurL. The protein is Phosphoribosylformylglycinamidine synthase subunit PurL of Pyrococcus horikoshii (strain ATCC 700860 / DSM 12428 / JCM 9974 / NBRC 100139 / OT-3).